Consider the following 335-residue polypeptide: Mitochondrial uncoupling protein 4C (335 aa).

3 Solcar repeats span residues 34–125 (RNLF…FRRP), 137–229 (LKIY…SKRT), and 238–329 (EGLP…LRQW). 6 helical membrane-spanning segments follow: residues 40-57 (YVNT…VFPL), 100-118 (GFSA…RVVL), 138-157 (KIYM…QALA), 204-223 (GVGP…VGSY), 244-264 (FVSS…ADVI), and 304-323 (GLMP…WLSV).

This sequence belongs to the mitochondrial carrier (TC 2.A.29) family.

The protein resides in the mitochondrion inner membrane. Mitochondrial protein that is likely to be responsible for thermogenic respiration. Likely to function in mitochondrial uncoupling i.e. creating mitochondrial proton leaks across the inner mitochondrial membrane and can therefore dissipate the mitochondrial proton gradient and convert the energy of substrate oxidation into heat instead of ATP. Involved in cold tolerance, it is required for development to the adult stage at low temperatures. This is Mitochondrial uncoupling protein 4C from Drosophila melanogaster (Fruit fly).